The sequence spans 84 residues: Small ribosomal subunit protein bS16c (84 aa).

This sequence belongs to the bacterial ribosomal protein bS16 family.

It localises to the plastid. It is found in the chloroplast. This Mesostigma viride (Green alga) protein is Small ribosomal subunit protein bS16c.